Reading from the N-terminus, the 388-residue chain is Processive diacylglycerol beta-glucosyltransferase (388 aa).

Belongs to the glycosyltransferase 28 family. UgtP subfamily.

The protein resides in the cell membrane. It catalyses the reaction a 1,2-diacyl-3-O-(beta-D-glucopyranosyl)-sn-glycerol + UDP-alpha-D-glucose = a 1,2-diacyl-3-O-(beta-D-Glc-(1-&gt;6)-beta-D-Glc)-sn-glycerol + UDP + H(+). The enzyme catalyses a 1,2-diacyl-3-O-(beta-D-Glc-(1-&gt;6)-beta-D-Glc)-sn-glycerol + UDP-alpha-D-glucose = a 1,2-diacyl-3-O-(beta-D-Glc-(1-&gt;6)-beta-D-Glc-(1-&gt;6)-beta-D-Glc)-sn-glycerol + UDP + H(+). The catalysed reaction is a 1,2-diacyl-sn-glycerol + UDP-alpha-D-glucose = a 1,2-diacyl-3-O-(beta-D-glucopyranosyl)-sn-glycerol + UDP + H(+). Its pathway is glycolipid metabolism; diglucosyl-diacylglycerol biosynthesis. In terms of biological role, processive glucosyltransferase involved in the biosynthesis of both the bilayer- and non-bilayer-forming membrane glucolipids. Is able to successively transfer up to three glucosyl residues to diacylglycerol (DAG), thereby catalyzing the formation of beta-monoglucosyl-DAG (3-O-(beta-D-glucopyranosyl)-1,2-diacyl-sn-glycerol), beta-diglucosyl-DAG (3-O-(beta-D-glucopyranosyl-beta-(1-&gt;6)-D-glucopyranosyl)-1,2-diacyl-sn-glycerol) and beta-triglucosyl-DAG (3-O-(beta-D-glucopyranosyl-beta-(1-&gt;6)-D-glucopyranosyl-beta-(1-&gt;6)-D-glucopyranosyl)-1,2-diacyl-sn-glycerol). Beta-diglucosyl-DAG is the predominant glycolipid found in Bacillales and is also used as a membrane anchor for lipoteichoic acid (LTA). This chain is Processive diacylglycerol beta-glucosyltransferase, found in Bacillus cereus (strain AH187).